The primary structure comprises 647 residues: ATP-binding protein Uup (647 aa).

ABC transporter domains follow at residues 1–253 and 320–546; these read MALI…RVEA and FEME…AKAK. Residues 36–43 and 352–359 contribute to the ATP site; these read GRNGAGKS and GPNGCGKT. Positions 545–563 are enriched in basic and acidic residues; sequence AKKSEPLKEESAVKNDRTS. Positions 545–569 are disordered; sequence AKKSEPLKEESAVKNDRTSKPKSVK. A C-terminal domain (CTD), binds DNA region spans residues 559–647; sequence NDRTSKPKSV…EKKNLVEGKA (89 aa).

Belongs to the ABC transporter superfamily. ABCF family. Uup subfamily.

It is found in the cytoplasm. It carries out the reaction ATP + H2O = ADP + phosphate + H(+). Its function is as follows. Probably plays a role in ribosome assembly or function. May be involved in resolution of branched DNA intermediates that result from template switching in postreplication gaps. Binds DNA and has ATPase activity. In Haemophilus influenzae (strain ATCC 51907 / DSM 11121 / KW20 / Rd), this protein is ATP-binding protein Uup.